A 57-amino-acid polypeptide reads, in one-letter code: U17-myrmicitoxin-Tb1a (57 aa).

The N-terminal stretch at 1–29 (MEKNRTNIFSVYLMITFLLISIFITMVMS) is a signal peptide. Residues 30 to 33 (DGEA) constitute a propeptide that is removed on maturation. Cys42 and Cys53 form a disulfide bridge. Ala56 is subject to Alanine amide.

In terms of processing, O-glycosylated. In terms of tissue distribution, expressed by the venom gland.

The protein resides in the secreted. Functionally, serine protease inhibitor which exhibits antifibrinolytic, antielastolytic and antimicrobial activities. Displays antimicrobial activity against bacteria and fungi. Likely functions in the innate immune response to microbial infection and possibly in the venom, as an antifibrinolytic agent. The polypeptide is U17-myrmicitoxin-Tb1a (Tetramorium bicarinatum (Tramp ant)).